A 327-amino-acid polypeptide reads, in one-letter code: Phenylalanine--tRNA ligase alpha subunit (327 aa).

Glutamate 252 lines the Mg(2+) pocket.

The protein belongs to the class-II aminoacyl-tRNA synthetase family. Phe-tRNA synthetase alpha subunit type 1 subfamily. Tetramer of two alpha and two beta subunits. It depends on Mg(2+) as a cofactor.

Its subcellular location is the cytoplasm. It carries out the reaction tRNA(Phe) + L-phenylalanine + ATP = L-phenylalanyl-tRNA(Phe) + AMP + diphosphate + H(+). The sequence is that of Phenylalanine--tRNA ligase alpha subunit from Shewanella oneidensis (strain ATCC 700550 / JCM 31522 / CIP 106686 / LMG 19005 / NCIMB 14063 / MR-1).